Consider the following 356-residue polypeptide: Peptide chain release factor 1 (356 aa).

Gln234 is modified (N5-methylglutamine).

Belongs to the prokaryotic/mitochondrial release factor family. Methylated by PrmC. Methylation increases the termination efficiency of RF1.

The protein localises to the cytoplasm. Peptide chain release factor 1 directs the termination of translation in response to the peptide chain termination codons UAG and UAA. The chain is Peptide chain release factor 1 from Parafrankia sp. (strain EAN1pec).